Reading from the N-terminus, the 265-residue chain is Osteoclast-associated immunoglobulin-like receptor (265 aa).

An N-terminal signal peptide occupies residues 1-18 (MVLSLILQLSTLWPACRA). Residues 19-231 (DFTPTAPLAS…LDYTQGNLIR (213 aa)) are Extracellular-facing. Ig-like domains are found at residues 22-115 (PTAP…SQPS) and 125-218 (QLPR…SFEG). N47 carries an N-linked (GlcNAc...) asparagine glycan. C52 and C99 are oxidised to a cystine. The N-linked (GlcNAc...) asparagine glycan is linked to N144. The helical transmembrane segment at 232 to 248 (LGLAGMVLICLGIIVTC) threads the bilayer. The Cytoplasmic segment spans residues 249–265 (DWHSRSSAFDGLLPQQN).

Belongs to the leukocyte receptor complex/polymeric immunoglobulin receptor (PIR/LRC) family. In terms of tissue distribution, specifically expressed in preosteoclasts or mature osteoclasts.

The protein localises to the cell membrane. Its function is as follows. Regulator of osteoclastogenesis which plays an important bone-specific function in osteoclast differentiation. The sequence is that of Osteoclast-associated immunoglobulin-like receptor (Oscar) from Mus musculus (Mouse).